The primary structure comprises 632 residues: Chaperone protein DnaK (632 aa).

A Phosphothreonine; by autocatalysis modification is found at T198. The tract at residues 524-557 (RREAVDAKNHADSLVHSTEKALAEHGSKIEDSER) is disordered.

It belongs to the heat shock protein 70 family.

In terms of biological role, acts as a chaperone. This chain is Chaperone protein DnaK, found in Nitrobacter hamburgensis (strain DSM 10229 / NCIMB 13809 / X14).